Here is a 313-residue protein sequence, read N- to C-terminus: Probable cell division protein WhiA (313 aa).

Residues 275–308 (SLRELGELAQPPLSKSCVNHRLRKLEQIAEHILA) constitute a DNA-binding region (H-T-H motif).

This sequence belongs to the WhiA family.

Functionally, involved in cell division and chromosome segregation. This chain is Probable cell division protein WhiA, found in Desulforudis audaxviator (strain MP104C).